The following is a 312-amino-acid chain: Malate dehydrogenase (312 aa).

Residues 7–13 (GAAGGIG) and Asp34 each bind NAD(+). Substrate is bound by residues Arg81 and Arg87. NAD(+)-binding positions include Asn94 and 117–119 (ITN). The substrate site is built by Asn119 and Arg153. His177 (proton acceptor) is an active-site residue. Residue Met227 coordinates NAD(+).

It belongs to the LDH/MDH superfamily. MDH type 1 family. As to quaternary structure, homodimer.

The enzyme catalyses (S)-malate + NAD(+) = oxaloacetate + NADH + H(+). In terms of biological role, catalyzes the reversible oxidation of malate to oxaloacetate. This Salmonella arizonae (strain ATCC BAA-731 / CDC346-86 / RSK2980) protein is Malate dehydrogenase.